The following is a 589-amino-acid chain: Monocopper oxidase-like protein SKS1 (589 aa).

The first 24 residues, 1 to 24, serve as a signal peptide directing secretion; sequence MAATCSLLASFLLCFALLSAVSFA. N-linked (GlcNAc...) asparagine glycans are attached at residues N62, N111, N204, N243, N260, N296, N345, N365, N433, and N447. A disordered region spans residues 322-356; it reads LPVPKTDVSSPWSAMSQPKTIRQNTSASGARPNPQ. The segment covering 328-349 has biased composition (polar residues); sequence DVSSPWSAMSQPKTIRQNTSAS. H455 contributes to the Cu cation binding site. The GPI-anchor amidated serine moiety is linked to residue S563. The propeptide at 564–589 is removed in mature form; it reads AATSILNGHLKLMLLMVLLASVFRFC.

The protein belongs to the multicopper oxidase family. Requires Cu cation as cofactor.

It is found in the cell membrane. This is Monocopper oxidase-like protein SKS1 (SKS1) from Arabidopsis thaliana (Mouse-ear cress).